We begin with the raw amino-acid sequence, 216 residues long: Sporamin B (216 aa).

An N-terminal signal peptide occupies residues 1 to 21 (MKALALLFVLSLYLLPNPAHS).

It belongs to the protease inhibitor I3 (leguminous Kunitz-type inhibitor) family. Accumulates specifically in tuberous roots and tubers upon tuberization. Sporamin accounts 60 to 80% of the total soluble protein of the organ.

The protein localises to the vacuole. In terms of biological role, major tuberous root protein. This Ipomoea batatas (Sweet potato) protein is Sporamin B (GSPO-B1).